We begin with the raw amino-acid sequence, 310 residues long: Alpha/beta hydrolase domain-containing protein 17A (310 aa).

Residues Ser-190, Asp-255, and His-284 each act as charge relay system in the active site. Ser-307 carries the post-translational modification Phosphoserine.

Belongs to the AB hydrolase superfamily. ABHD17 family. Palmitoylated on cysteine residues located in a cysteine cluster at the N-terminus which promotes membrane localization. Palmitoylation is required for post-synaptic localization and for depalmitoylating activity towards DLG4/PSD95.

It is found in the cell membrane. It localises to the endosome membrane. The protein resides in the cell projection. The protein localises to the dendritic spine. Its subcellular location is the postsynaptic density membrane. The catalysed reaction is S-hexadecanoyl-L-cysteinyl-[protein] + H2O = L-cysteinyl-[protein] + hexadecanoate + H(+). Hydrolyzes fatty acids from S-acylated cysteine residues in proteins. Has depalmitoylating activity towards NRAS. Has depalmitoylating activity towards DLG4/PSD95. May have depalmitoylating activity towards MAP6. The protein is Alpha/beta hydrolase domain-containing protein 17A of Bos taurus (Bovine).